Reading from the N-terminus, the 54-residue chain is Conotoxin vc5c (54 aa).

The first 14 residues, 1 to 14 (VILLLLIASIPSDA), serve as a signal peptide directing secretion. Residues 15–43 (VQLKTKDDMPLASFHGNARRTLQMLSNKR) constitute a propeptide that is removed on maturation. Residue glutamate 50 is modified to 4-carboxyglutamate. Residue tryptophan 51 is modified to 6'-bromotryptophan.

The protein belongs to the conotoxin T superfamily. Contains 2 disulfide bonds that can be either 'C1-C3, C2-C4' or 'C1-C4, C2-C3', since these disulfide connectivities have been observed for conotoxins with cysteine framework V (for examples, see AC P0DQQ7 and AC P81755). Expressed by the venom duct.

The protein localises to the secreted. This chain is Conotoxin vc5c, found in Conus victoriae (Queen Victoria cone).